The following is a 363-amino-acid chain: Photosystem II protein D1 1 (363 aa).

The next 3 helical transmembrane spans lie at 32–49 (YVGW…VSAI), 121–136 (HFLI…QWEL), and 145–159 (WIAM…AATA). H121 is a chlorophyll a binding site. Y129 contributes to the pheophytin a binding site. Residues E173 and E192 each coordinate [CaMn4O5] cluster. A helical membrane pass occupies residues 200-221 (FHMLGVVGVFGGAFLSAMHGSL). H201 serves as a coordination point for chlorophyll a. Residues H218 and 268–269 (AF) contribute to the a quinone site. Fe cation is bound at residue H218. Residue H276 participates in Fe cation binding. Residues 278 to 292 (LLAVLPTIGIWFAAL) traverse the membrane as a helical segment. 2 residues coordinate [CaMn4O5] cluster: H336 and A348. Residues 349-363 (STESKEIPTIPIMTS) constitute a propeptide that is removed on maturation.

The protein belongs to the reaction center PufL/M/PsbA/D family. PSII is composed of 1 copy each of membrane proteins PsbA, PsbB, PsbC, PsbD, PsbE, PsbF, PsbH, PsbI, PsbJ, PsbK, PsbL, PsbM, PsbT, PsbX, PsbY, PsbZ, Psb30/Ycf12, peripheral proteins PsbO, CyanoQ (PsbQ), PsbU, PsbV and a large number of cofactors. It forms dimeric complexes. The cofactor is The D1/D2 heterodimer binds P680, chlorophylls that are the primary electron donor of PSII, and subsequent electron acceptors. It shares a non-heme iron and each subunit binds pheophytin, quinone, additional chlorophylls, carotenoids and lipids. D1 provides most of the ligands for the Mn4-Ca-O5 cluster of the oxygen-evolving complex (OEC). There is also a Cl(-1) ion associated with D1 and D2, which is required for oxygen evolution. The PSII complex binds additional chlorophylls, carotenoids and specific lipids.. In terms of processing, tyr-164 forms a radical intermediate that is referred to as redox-active TyrZ, YZ or Y-Z. Post-translationally, C-terminally processed by CtpA; processing is essential to allow assembly of the oxygen-evolving complex and thus photosynthetic growth.

The protein localises to the cellular thylakoid membrane. The catalysed reaction is 2 a plastoquinone + 4 hnu + 2 H2O = 2 a plastoquinol + O2. Photosystem II (PSII) is a light-driven water:plastoquinone oxidoreductase that uses light energy to abstract electrons from H(2)O, generating O(2) and a proton gradient subsequently used for ATP formation. It consists of a core antenna complex that captures photons, and an electron transfer chain that converts photonic excitation into a charge separation. The D1/D2 (PsbA/PsbD) reaction center heterodimer binds P680, the primary electron donor of PSII as well as several subsequent electron acceptors. This Acaryochloris marina (strain MBIC 11017) protein is Photosystem II protein D1 1.